Consider the following 183-residue polypeptide: uncharacterized protein (183 aa).

The signal sequence occupies residues 1–23; it reads MSAFKKSLLVAGVAMILSNNVFA. Cys41 and Cys80 are disulfide-bonded.

Belongs to the fimbrial protein family.

The protein localises to the fimbrium. This is an uncharacterized protein from Escherichia coli (strain K12).